A 752-amino-acid chain; its full sequence is Pre-mRNA-processing factor 39 (752 aa).

The disordered stretch occupies residues 1–148; the sequence is MEDSGESMTG…DPAAPQEPEL (148 aa). Residues 28-42 are compositionally biased toward polar residues; the sequence is TTGTDDVTGLSTSDL. Composition is skewed to low complexity over residues 43–56, 76–94, and 133–148; these read TTEQ…QTQP, QSAS…PPES, and EPAA…EPEL. HAT repeat units follow at residues 180–212, 214–246, and 254–289; these read NHLL…IERK, GYIQ…FLRE, and EAES…WETE. Positions 347–374 are disordered; that stretch reads NKPSGDEDAETEAPGEELPPGTEDLPDP. Positions 352–361 are enriched in acidic residues; it reads DEDAETEAPG. 2 HAT repeats span residues 408-440 and 442-474; these read AFEE…FELE and GTPE…YLES. The segment covering 678-699 has biased composition (basic and acidic residues); the sequence is SFKRKAENGSEEPDAKRQRTDD. Positions 678 to 703 are disordered; that stretch reads SFKRKAENGSEEPDAKRQRTDDQSVA. The stretch at 700–731 is one HAT 6 repeat; that stretch reads QSVASGQMMDMQANHAGYNYNNWYQYNSWGSQ.

It belongs to the PRP39 family.

The protein localises to the nucleus. Involved in pre-mRNA splicing. The sequence is that of Pre-mRNA-processing factor 39 (prpf39) from Danio rerio (Zebrafish).